The sequence spans 94 residues: Acylphosphatase (94 aa).

In terms of domain architecture, Acylphosphatase-like spans 8–94; it reads RFTARVVGRV…QGDLADFRRK (87 aa). Active-site residues include arginine 23 and asparagine 41.

Belongs to the acylphosphatase family.

It carries out the reaction an acyl phosphate + H2O = a carboxylate + phosphate + H(+). This Frankia alni (strain DSM 45986 / CECT 9034 / ACN14a) protein is Acylphosphatase (acyP).